A 341-amino-acid polypeptide reads, in one-letter code: Antihemorrhagic factor BJ46a (341 aa).

The signal sequence occupies residues 1–19; sequence MNSLVALVLLGQIIGSTLS. Cystatin fetuin-A-type domains are found at residues 22–130 and 141–254; these read VRGD…AKCH and RNCP…SDCV. Positions 23–25 match the Cell attachment site motif; sequence RGD. Intrachain disulfides connect Cys28–Cys332, Cys85–Cys96, Cys110–Cys129, Cys143–Cys146, Cys205–Cys217, and Cys230–Cys253. N-linked (GlcNAc...) asparagine glycosylation occurs at Asn95. N-linked (GlcNAc...) asparagine glycosylation is present at Asn204. Residues Asn282 and Asn293 are each glycosylated (N-linked (GlcNAc...) asparagine).

As to quaternary structure, homodimer. Expressed by the liver.

The protein localises to the secreted. Functionally, potent inhibitor of hemorrhagic activity but also proteolytic activities of atrolysin C and jararhagin. Inhibition occurs by formation of a non-covalent complex between BJ46a and the proteinases at their metalloproteinase domains. This chain is Antihemorrhagic factor BJ46a, found in Bothrops jararaca (Jararaca).